The following is a 407-amino-acid chain: tRNA(Ile)-lysidine synthase (407 aa).

36-41 (SGGRDS) contributes to the ATP binding site.

It belongs to the tRNA(Ile)-lysidine synthase family.

The protein resides in the cytoplasm. It catalyses the reaction cytidine(34) in tRNA(Ile2) + L-lysine + ATP = lysidine(34) in tRNA(Ile2) + AMP + diphosphate + H(+). Its function is as follows. Ligates lysine onto the cytidine present at position 34 of the AUA codon-specific tRNA(Ile) that contains the anticodon CAU, in an ATP-dependent manner. Cytidine is converted to lysidine, thus changing the amino acid specificity of the tRNA from methionine to isoleucine. The protein is tRNA(Ile)-lysidine synthase of Tropheryma whipplei (strain TW08/27) (Whipple's bacillus).